The chain runs to 278 residues: Rhomboid protease GlpG (278 aa).

Transmembrane regions (helical) follow at residues 94–114 (AGPL…LMLI), 143–163 (AFLH…WYLG), 175–195 (LLVL…LFSG), 196–216 (ANFG…WLTG), 224–241 (ISLP…LIAG), and 245–267 (ILGL…LMAF). The active-site Nucleophile is the Ser202. Residue His255 is part of the active site.

Belongs to the peptidase S54 family.

The protein localises to the cell inner membrane. The catalysed reaction is Cleaves type-1 transmembrane domains using a catalytic dyad composed of serine and histidine that are contributed by different transmembrane domains.. In terms of biological role, rhomboid-type serine protease that catalyzes intramembrane proteolysis. The protein is Rhomboid protease GlpG of Yersinia pseudotuberculosis serotype I (strain IP32953).